The primary structure comprises 203 residues: MEGSTSPKALRVAAISGSLRRGSANTGLIRAAKEICEESIPGMVIDHVDIPDLPLLNTDMEVDDGFPPAVEAFRASVRAADCFLFASPEYNYSISGPLKNALDWGSRPPNCWADRAAAIVSASGGSGGSRSMYHIRQVGVFLDIHFINKPEVFIKAHQPPKKFDSDGNLIDPEIKEELKDMLLSLQAFALRLQGKPANSKHAA.

It belongs to the SsuE family. Homotetramer. FMN is required as a cofactor.

It catalyses the reaction a quinone + NADH + H(+) = a quinol + NAD(+). The catalysed reaction is a quinone + NADPH + H(+) = a quinol + NADP(+). In terms of biological role, the enzyme apparently serves as a quinone reductase in connection with conjugation reactions of hydroquinones involved in detoxification pathways. In Oryza sativa subsp. japonica (Rice), this protein is Probable NADPH:quinone oxidoreductase 2.